The primary structure comprises 228 residues: Leucyl/phenylalanyl-tRNA--protein transferase (228 aa).

It belongs to the L/F-transferase family.

The protein resides in the cytoplasm. The catalysed reaction is N-terminal L-lysyl-[protein] + L-leucyl-tRNA(Leu) = N-terminal L-leucyl-L-lysyl-[protein] + tRNA(Leu) + H(+). It catalyses the reaction N-terminal L-arginyl-[protein] + L-leucyl-tRNA(Leu) = N-terminal L-leucyl-L-arginyl-[protein] + tRNA(Leu) + H(+). The enzyme catalyses L-phenylalanyl-tRNA(Phe) + an N-terminal L-alpha-aminoacyl-[protein] = an N-terminal L-phenylalanyl-L-alpha-aminoacyl-[protein] + tRNA(Phe). Functions in the N-end rule pathway of protein degradation where it conjugates Leu, Phe and, less efficiently, Met from aminoacyl-tRNAs to the N-termini of proteins containing an N-terminal arginine or lysine. The polypeptide is Leucyl/phenylalanyl-tRNA--protein transferase (Lawsonia intracellularis (strain PHE/MN1-00)).